The primary structure comprises 165 residues: 6,7-dimethyl-8-ribityllumazine synthase (165 aa).

Residues Phe-24, 62 to 64, and 86 to 88 contribute to the 5-amino-6-(D-ribitylamino)uracil site; these read AFE and AVI. 91-92 provides a ligand contact to (2S)-2-hydroxy-3-oxobutyl phosphate; the sequence is DT. The Proton donor role is filled by His-94. Residue Phe-119 participates in 5-amino-6-(D-ribitylamino)uracil binding. Arg-133 serves as a coordination point for (2S)-2-hydroxy-3-oxobutyl phosphate.

Belongs to the DMRL synthase family.

It catalyses the reaction (2S)-2-hydroxy-3-oxobutyl phosphate + 5-amino-6-(D-ribitylamino)uracil = 6,7-dimethyl-8-(1-D-ribityl)lumazine + phosphate + 2 H2O + H(+). The protein operates within cofactor biosynthesis; riboflavin biosynthesis; riboflavin from 2-hydroxy-3-oxobutyl phosphate and 5-amino-6-(D-ribitylamino)uracil: step 1/2. Its function is as follows. Catalyzes the formation of 6,7-dimethyl-8-ribityllumazine by condensation of 5-amino-6-(D-ribitylamino)uracil with 3,4-dihydroxy-2-butanone 4-phosphate. This is the penultimate step in the biosynthesis of riboflavin. The sequence is that of 6,7-dimethyl-8-ribityllumazine synthase from Prochlorococcus marinus (strain MIT 9313).